Reading from the N-terminus, the 347-residue chain is NADH-ubiquinone oxidoreductase chain 2 (347 aa).

11 helical membrane passes run 1 to 21 (MNPM…SIVM), 25 to 45 (HWFL…PVLM), 60 to 80 (FLTQ…NLMF), 96 to 116 (MLLT…FWVP), 127 to 147 (GLIL…QIYP), 149 to 169 (INTN…GWGG), 178 to 198 (IMAY…IYNP), 202 to 222 (LLNL…LIFA), 239 to 259 (IITI…PLTG), 274 to 294 (NSVI…FFYM), and 326 to 346 (MMPL…FILL).

It belongs to the complex I subunit 2 family. In terms of assembly, core subunit of respiratory chain NADH dehydrogenase (Complex I) which is composed of 45 different subunits. Interacts with TMEM242.

Its subcellular location is the mitochondrion inner membrane. It catalyses the reaction a ubiquinone + NADH + 5 H(+)(in) = a ubiquinol + NAD(+) + 4 H(+)(out). In terms of biological role, core subunit of the mitochondrial membrane respiratory chain NADH dehydrogenase (Complex I) that is believed to belong to the minimal assembly required for catalysis. Complex I functions in the transfer of electrons from NADH to the respiratory chain. The immediate electron acceptor for the enzyme is believed to be ubiquinone. This is NADH-ubiquinone oxidoreductase chain 2 from Suncus etruscus (Etruscan shrew).